Consider the following 440-residue polypeptide: Proton extrusion protein PxcA (440 aa).

The next 4 helical transmembrane spans lie at Phe222–Leu242, Asn316–Val336, Ile352–Gly374, and Phe400–Ile420.

Belongs to the CemA family.

Its subcellular location is the cell inner membrane. Functionally, required for H(+) efflux immediately after light irradiation to form a rapid H(+) concentration gradient across the thylakoid membranes. Together with PxcL, contributes to transient H(+) uptake following dark to light transition. Involved in light-induced Na(+)-dependent proton extrusion. Also seems to be involved in CO(2) transport. The chain is Proton extrusion protein PxcA from Synechocystis sp. (strain ATCC 27184 / PCC 6803 / Kazusa).